The chain runs to 107 residues: Large ribosomal subunit protein uL24 (107 aa).

It belongs to the universal ribosomal protein uL24 family. Part of the 50S ribosomal subunit.

One of two assembly initiator proteins, it binds directly to the 5'-end of the 23S rRNA, where it nucleates assembly of the 50S subunit. Functionally, one of the proteins that surrounds the polypeptide exit tunnel on the outside of the subunit. In Kosmotoga olearia (strain ATCC BAA-1733 / DSM 21960 / TBF 19.5.1), this protein is Large ribosomal subunit protein uL24.